A 485-amino-acid chain; its full sequence is Rop guanine nucleotide exchange factor 2 (485 aa).

The interval 1–36 is disordered; the sequence is MENLPNHEENDDVGYHQSPGPIDPNDHSASETPVYS. The region spanning 107 to 485 is the PRONE domain; the sequence is LAVQEISEPE…YVDKTMRGEE (379 aa).

As to quaternary structure, interacts with ARC10/ROP11. As to expression, expressed in the vascular tissues of roots, leaves, sepals, petals and siliques.

Its function is as follows. Guanine-nucleotide exchange factor (GEF) that acts as an activator of Rop (Rho of plants) GTPases by promoting the exchange of GDP for GTP. This Arabidopsis thaliana (Mouse-ear cress) protein is Rop guanine nucleotide exchange factor 2 (ROPGEF2).